A 116-amino-acid polypeptide reads, in one-letter code: NADH-ubiquinone oxidoreductase chain 3 (116 aa).

A run of 3 helical transmembrane segments spans residues 3–23, 56–76, and 87–107; these read LIMTILTITVALSLILATVSF, FFLVAILFLLFDLEIALLLPL, and GTFFWATTVLILLTLGLIYEW.

The protein belongs to the complex I subunit 3 family.

It is found in the mitochondrion membrane. It catalyses the reaction a ubiquinone + NADH + 5 H(+)(in) = a ubiquinol + NAD(+) + 4 H(+)(out). Functionally, core subunit of the mitochondrial membrane respiratory chain NADH dehydrogenase (Complex I) that is believed to belong to the minimal assembly required for catalysis. Complex I functions in the transfer of electrons from NADH to the respiratory chain. The immediate electron acceptor for the enzyme is believed to be ubiquinone. The polypeptide is NADH-ubiquinone oxidoreductase chain 3 (MT-ND3) (Cyprinus carpio (Common carp)).